Consider the following 345-residue polypeptide: UDP-N-acetylenolpyruvoylglucosamine reductase (345 aa).

In terms of domain architecture, FAD-binding PCMH-type spans 16–186 (LPAYASNVIS…VSVGIKLMKS (171 aa)). The active site involves R162. The active-site Proton donor is the S232. The active site involves E328.

It belongs to the MurB family. Requires FAD as cofactor.

The protein resides in the cytoplasm. The catalysed reaction is UDP-N-acetyl-alpha-D-muramate + NADP(+) = UDP-N-acetyl-3-O-(1-carboxyvinyl)-alpha-D-glucosamine + NADPH + H(+). The protein operates within cell wall biogenesis; peptidoglycan biosynthesis. Cell wall formation. The protein is UDP-N-acetylenolpyruvoylglucosamine reductase of Yersinia pestis.